Reading from the N-terminus, the 793-residue chain is Sucrose synthase (793 aa).

Residues 263 to 742 (MISRILIVSI…ALARVAERYT (480 aa)) form a GT-B glycosyltransferase region.

Belongs to the glycosyltransferase 1 family. In terms of assembly, homotetramer.

The catalysed reaction is an NDP-alpha-D-glucose + D-fructose = a ribonucleoside 5'-diphosphate + sucrose + H(+). It catalyses the reaction ADP-alpha-D-glucose + D-fructose = sucrose + ADP + H(+). In terms of biological role, catalyzes the reversible conversion of sucrose and a nucleotide disphosphate (NDP) into fructose and NDP-glucose; although the reaction is freely reversible in vitro, the physiological reaction seems to be sucrose cleavage. Unlike characterized plant enzymes prefers ADP as a cosubstrate, whereas plants prefer UDP. The KM for sucrose is 45-fold lower in the presence of ADP than UDP. Its preference for ADP over UDP suggests it may directly link sucrose and glycogen metabolism. The sequence is that of Sucrose synthase from Acidithiobacillus caldus (strain ATCC 51756 / DSM 8584 / KU).